Reading from the N-terminus, the 271-residue chain is MSDSHHTPEAASASLRHVRAKGEPRFPDGPKADPAGSHFERRIRSFQPRRSRVTAGQADALQRLWPLWGLDIDGRRVVDLAELFGNARPVVLEIGFGMGETTARMAAADPDTNILAADVHTPGQGNLLGLAERQELPNIRVANGDAIILLREMLAPGSLAGLRVYFPDPWPKKRHHKRRLIQPEFLTLAATRLAPGAVVHCATDWEPYAEQMLDVLTAHPDFENTVPGGGFAPRPEHRPLTRFEGQGLDKGHVVNDLLFRRVQHKEPPPNG.

The segment at 1–52 is disordered; sequence MSDSHHTPEAASASLRHVRAKGEPRFPDGPKADPAGSHFERRIRSFQPRRSR. A compositionally biased stretch (basic and acidic residues) spans 20–31; that stretch reads AKGEPRFPDGPK. E93, D118, D145, and D168 together coordinate S-adenosyl-L-methionine. D168 is an active-site residue. Substrate contacts are provided by residues K172, D204, and 241–244; that span reads TRFE.

It belongs to the class I-like SAM-binding methyltransferase superfamily. TrmB family.

It catalyses the reaction guanosine(46) in tRNA + S-adenosyl-L-methionine = N(7)-methylguanosine(46) in tRNA + S-adenosyl-L-homocysteine. The protein operates within tRNA modification; N(7)-methylguanine-tRNA biosynthesis. In terms of biological role, catalyzes the formation of N(7)-methylguanine at position 46 (m7G46) in tRNA. In Streptomyces coelicolor (strain ATCC BAA-471 / A3(2) / M145), this protein is tRNA (guanine-N(7)-)-methyltransferase.